The chain runs to 475 residues: Ribulose bisphosphate carboxylase large chain (475 aa).

A propeptide spanning residues 1-2 (MS) is cleaved from the precursor. The residue at position 3 (P3) is an N-acetylproline. The residue at position 14 (K14) is an N6,N6,N6-trimethyllysine. Substrate is bound by residues N123 and T173. K175 functions as the Proton acceptor in the catalytic mechanism. K177 contacts substrate. The Mg(2+) site is built by K201, D203, and E204. K201 carries the post-translational modification N6-carboxylysine. Catalysis depends on H294, which acts as the Proton acceptor. 3 residues coordinate substrate: R295, H327, and S379.

It belongs to the RuBisCO large chain family. Type I subfamily. As to quaternary structure, heterohexadecamer of 8 large chains and 8 small chains; disulfide-linked. The disulfide link is formed within the large subunit homodimers. Mg(2+) is required as a cofactor. The disulfide bond which can form in the large chain dimeric partners within the hexadecamer appears to be associated with oxidative stress and protein turnover.

It is found in the plastid. Its subcellular location is the chloroplast. It catalyses the reaction 2 (2R)-3-phosphoglycerate + 2 H(+) = D-ribulose 1,5-bisphosphate + CO2 + H2O. It carries out the reaction D-ribulose 1,5-bisphosphate + O2 = 2-phosphoglycolate + (2R)-3-phosphoglycerate + 2 H(+). Functionally, ruBisCO catalyzes two reactions: the carboxylation of D-ribulose 1,5-bisphosphate, the primary event in carbon dioxide fixation, as well as the oxidative fragmentation of the pentose substrate in the photorespiration process. Both reactions occur simultaneously and in competition at the same active site. In Atriplex rosea (Red orache), this protein is Ribulose bisphosphate carboxylase large chain.